The following is a 254-amino-acid chain: Probable derlin-2 homolog (254 aa).

Residues 1–17 (MAQPFEDWYKNLPIVTK) are Cytoplasmic-facing. Residues 18 to 38 (IYMTGCVVTSVSVYLGLVGPL) form a helical membrane-spanning segment. Over 39 to 95 (RLYLNFPLVFGKYEFWRLFTNFFFYDEIGMNFFFHMYFLVRHSRLLEESSFRGRSAD) the chain is Lumenal. Residues 96 to 116 (YLFMWIFGSFLLLIMDAFLFY) form a helical membrane-spanning segment. Residues 117-118 (TK) lie on the Cytoplasmic side of the membrane. A helical membrane pass occupies residues 119–139 (IVTKVLFLAPSIAFMVIYVWS). The Lumenal portion of the chain corresponds to 140-146 (RRNPNMH). Residues 147 to 167 (ISFLGLFTFSAPYLPWVILIM) traverse the membrane as a helical segment. Residues 168–254 (GYLFNHDLTT…FLNEDDLDQQ (87 aa)) lie on the Cytoplasmic side of the membrane.

The protein belongs to the derlin family.

Its subcellular location is the endoplasmic reticulum membrane. In terms of biological role, may be involved in the degradation process of specific misfolded endoplasmic reticulum (ER) luminal proteins. May also be involved in endoplasmic reticulum stress-induced pre-emptive quality control, a mechanism that selectively attenuates the translocation of newly synthesized proteins into the endoplasmic reticulum and reroutes them to the cytosol for proteasomal degradation. This is Probable derlin-2 homolog (derl2) from Dictyostelium discoideum (Social amoeba).